The chain runs to 94 residues: Integration host factor subunit beta (94 aa).

It belongs to the bacterial histone-like protein family. In terms of assembly, heterodimer of an alpha and a beta chain.

Its function is as follows. This protein is one of the two subunits of integration host factor, a specific DNA-binding protein that functions in genetic recombination as well as in transcriptional and translational control. The polypeptide is Integration host factor subunit beta (Escherichia coli O127:H6 (strain E2348/69 / EPEC)).